The primary structure comprises 41 residues: Perlinhibin (41 aa).

Post-translationally, contains four disulfide bonds.

Binds to calcite crystals in the shell and inhibits further shell growth at the binding site. The chain is Perlinhibin from Haliotis laevigata (Smooth Australian abalone).